Here is a 158-residue protein sequence, read N- to C-terminus: Cyclic pyranopterin monophosphate synthase (158 aa).

Residues 76–78 (LCH) and 114–115 (ME) each bind substrate. Asp-129 is an active-site residue.

This sequence belongs to the MoaC family. Homohexamer; trimer of dimers.

It catalyses the reaction (8S)-3',8-cyclo-7,8-dihydroguanosine 5'-triphosphate = cyclic pyranopterin phosphate + diphosphate. The protein operates within cofactor biosynthesis; molybdopterin biosynthesis. In terms of biological role, catalyzes the conversion of (8S)-3',8-cyclo-7,8-dihydroguanosine 5'-triphosphate to cyclic pyranopterin monophosphate (cPMP). This is Cyclic pyranopterin monophosphate synthase from Shewanella loihica (strain ATCC BAA-1088 / PV-4).